The chain runs to 509 residues: Cation transporter HKT2;4 (509 aa).

Residues 1–32 (MPIRLHIFVSSARHAINSSALICRFIAFHLSP) lie on the Cytoplasmic side of the membrane. 2 consecutive transmembrane segments (helical) span residues 33–53 (LLIH…ALVV) and 96–116 (VLTL…GLVL). At 117–164 (ESSKQNKHDPENRRVSSVTVCEQSHLEEAIPQTPSMNSTDIKRSCHKY) the chain is on the cytoplasmic side. 2 consecutive transmembrane segments (helical) span residues 165–185 (LVFV…LLVF) and 237–257 (GLLL…PMFL). Over 258-296 (RLVIWALRGLRLAKAEEPDFMMNNSSSVGFSHLLPNLQT) the chain is Cytoplasmic. The next 2 helical transmembrane spans lie at 297–317 (IFLA…FCCL) and 353–373 (CSLV…TPSL). Topologically, residues 374-400 (TKLFSACQDHKQIGPESDDRTSKGKPF) are cytoplasmic. 2 helical membrane passes run 401-421 (LKTM…LVCI) and 476-496 (SFSG…MLYG). At 497–509 (RLNSKDSTSARTR) the chain is on the cytoplasmic side.

This sequence belongs to the TrkH potassium transport family. HKT (TC 2.A.38.3) subfamily. As to expression, expressed in spikelets, leaf blades, leaf sheaths, internodes, nodes, the base of stems and roots.

It is found in the cell membrane. It catalyses the reaction K(+)(in) = K(+)(out). The catalysed reaction is Mg(2+)(in) = Mg(2+)(out). The enzyme catalyses Ca(2+)(in) = Ca(2+)(out). Its function is as follows. High-affinity potassium transporter that does not show potassium-sodium cotransport. Potassium transport seems to be independent of sodium. Mediates transport of the divalent cations magnesium and calcium in the absence of competing potassium ions. Selectivity for potassium is dominant over divalent cations, and magnesium and calcium transport may be small and may depend on competing potassium concentrations. The protein is Cation transporter HKT2;4 of Oryza sativa subsp. japonica (Rice).